Here is a 107-residue protein sequence, read N- to C-terminus: Large ribosomal subunit protein uL24 (107 aa).

This sequence belongs to the universal ribosomal protein uL24 family. In terms of assembly, part of the 50S ribosomal subunit.

Its function is as follows. One of two assembly initiator proteins, it binds directly to the 5'-end of the 23S rRNA, where it nucleates assembly of the 50S subunit. Functionally, one of the proteins that surrounds the polypeptide exit tunnel on the outside of the subunit. This is Large ribosomal subunit protein uL24 from Fervidobacterium nodosum (strain ATCC 35602 / DSM 5306 / Rt17-B1).